A 420-amino-acid polypeptide reads, in one-letter code: Tyrosine--tRNA ligase 2 (420 aa).

Y34 contributes to the L-tyrosine binding site. Positions 39-48 (PTGDSMHIGH) match the 'HIGH' region motif. L-tyrosine contacts are provided by Y168 and Q172. The short motif at 230–234 (KFGKS) is the 'KMSKS' region element. K233 provides a ligand contact to ATP. The region spanning 352 to 418 (KNIVEWLVDL…GKKNYSLVKL (67 aa)) is the S4 RNA-binding domain.

It belongs to the class-I aminoacyl-tRNA synthetase family. TyrS type 1 subfamily. Homodimer.

Its subcellular location is the cytoplasm. The enzyme catalyses tRNA(Tyr) + L-tyrosine + ATP = L-tyrosyl-tRNA(Tyr) + AMP + diphosphate + H(+). Functionally, catalyzes the attachment of tyrosine to tRNA(Tyr) in a two-step reaction: tyrosine is first activated by ATP to form Tyr-AMP and then transferred to the acceptor end of tRNA(Tyr). In Bacillus cereus (strain ATCC 14579 / DSM 31 / CCUG 7414 / JCM 2152 / NBRC 15305 / NCIMB 9373 / NCTC 2599 / NRRL B-3711), this protein is Tyrosine--tRNA ligase 2.